A 99-amino-acid chain; its full sequence is Progonadoliberin-1 (99 aa).

The N-terminal stretch at 1 to 26 (MAAQTFALRLLLVGTLLGTLLGQGCC) is a signal peptide. Glutamine 27 is subject to Pyrrolidone carboxylic acid. A Glycine amide modification is found at glycine 36.

The protein belongs to the GnRH family.

Its subcellular location is the secreted. Stimulates the secretion of gonadotropins. The protein is Progonadoliberin-1 (gnrh1) of Dicentrarchus labrax (European seabass).